We begin with the raw amino-acid sequence, 251 residues long: Aliphatic sulfonates import ATP-binding protein SsuB (251 aa).

An ABC transporter domain is found at Val-3 to Gln-231. An ATP-binding site is contributed by Gly-39–Ser-46.

This sequence belongs to the ABC transporter superfamily. Aliphatic sulfonates importer (TC 3.A.1.17.2) family. The complex is composed of two ATP-binding proteins (SsuB), two transmembrane proteins (SsuC) and a solute-binding protein (SsuA).

It is found in the cell membrane. The enzyme catalyses ATP + H2O + aliphatic sulfonate-[sulfonate-binding protein]Side 1 = ADP + phosphate + aliphatic sulfonateSide 2 + [sulfonate-binding protein]Side 1.. In terms of biological role, part of the ABC transporter complex SsuABC involved in aliphatic sulfonates import. Responsible for energy coupling to the transport system. This is Aliphatic sulfonates import ATP-binding protein SsuB from Bacillus anthracis.